The primary structure comprises 289 residues: 4-diphosphocytidyl-2-C-methyl-D-erythritol kinase (289 aa).

The active site involves Lys10. Pro94 to Ser104 contributes to the ATP binding site. Asp136 is a catalytic residue.

This sequence belongs to the GHMP kinase family. IspE subfamily.

It catalyses the reaction 4-CDP-2-C-methyl-D-erythritol + ATP = 4-CDP-2-C-methyl-D-erythritol 2-phosphate + ADP + H(+). It functions in the pathway isoprenoid biosynthesis; isopentenyl diphosphate biosynthesis via DXP pathway; isopentenyl diphosphate from 1-deoxy-D-xylulose 5-phosphate: step 3/6. Functionally, catalyzes the phosphorylation of the position 2 hydroxy group of 4-diphosphocytidyl-2C-methyl-D-erythritol. This Bacillus licheniformis (strain ATCC 14580 / DSM 13 / JCM 2505 / CCUG 7422 / NBRC 12200 / NCIMB 9375 / NCTC 10341 / NRRL NRS-1264 / Gibson 46) protein is 4-diphosphocytidyl-2-C-methyl-D-erythritol kinase.